Consider the following 93-residue polypeptide: Integration host factor subunit beta (93 aa).

This sequence belongs to the bacterial histone-like protein family. As to quaternary structure, heterodimer of an alpha and a beta chain.

Functionally, this protein is one of the two subunits of integration host factor, a specific DNA-binding protein that functions in genetic recombination as well as in transcriptional and translational control. The chain is Integration host factor subunit beta from Glaesserella parasuis serovar 5 (strain SH0165) (Haemophilus parasuis).